A 744-amino-acid polypeptide reads, in one-letter code: Tripartite motif-containing protein 2 (744 aa).

Phosphoserine is present on Ser10. The RING-type zinc-finger motif lies at 23–64 (CSICLERYKNPKVLPCLHTFCERCLQNYIPAHSLTLSCPVCR). The B box-type zinc-finger motif lies at 113 to 154 (GKPLSCPNHDGNVMEFYCQSCETAMCRECTEGEHAEHPTVPL). Residues Cys118, His121, Cys141, and His146 each coordinate Zn(2+). A Filamin repeat occupies 320–421 (TTNAVASETV…IRGSPFKLKV (102 aa)). Phosphothreonine is present on Thr371. 3 positions are modified to phosphoserine: Ser375, Ser424, and Ser428. A disordered region spans residues 432–462 (EGVKRRVKSPGSGHVKQKAVKRPASMYSTGK). NHL repeat units follow at residues 473–516 (IFRV…FSND), 520–563 (KSRF…FSND), 564–605 (GKFK…FQPN), 609–652 (VTRF…FNQE), 656–699 (MLKF…FDGS), and 700–743 (GSFL…YRYL).

It belongs to the TRIM/RBCC family. As to quaternary structure, forms homooligomers. Interacts with TRIM3; this interaction reduces TRIM2 activity. Interacts with myosin V; myosin V may not be a substrate for ubiquitination. Interacts with NEFL. Interacts with phosphorylated BCL2L11. Interacts with SIRPA. RING-type zinc finger-dependent and UBE2D1-dependent autoubiquitination. In terms of tissue distribution, highly expressed in the cerebellum, hippocampus, retina and spinal cord. In the cerebellum, strongest expression in Purkinje cells and in the deep cerebellar nuclei. In retina, high expression in the ganglionic cell layer, inner nuclear layer and inthe outer plexiform layer. Particularly high expression in the hippocampus, in pyramidal cells of CA1-CA3 hippocampal areas and ingranule cells of the dentate gyrus.

It is found in the cytoplasm. It carries out the reaction S-ubiquitinyl-[E2 ubiquitin-conjugating enzyme]-L-cysteine + [acceptor protein]-L-lysine = [E2 ubiquitin-conjugating enzyme]-L-cysteine + N(6)-ubiquitinyl-[acceptor protein]-L-lysine.. It functions in the pathway protein modification; protein ubiquitination. UBE2D1-dependent E3 ubiquitin-protein ligase that mediates the ubiquitination of NEFL and of phosphorylated BCL2L11. Plays a neuroprotective function. May play a role in neuronal rapid ischemic tolerance. Plays a role in antiviral immunity and limits new world arenavirus infection independently of its ubiquitin ligase activity by decreasing virus internalization. In Mus musculus (Mouse), this protein is Tripartite motif-containing protein 2 (Trim2).